The following is an 876-amino-acid chain: Alanine--tRNA ligase (876 aa).

4 residues coordinate Zn(2+): histidine 565, histidine 569, cysteine 667, and histidine 671.

The protein belongs to the class-II aminoacyl-tRNA synthetase family. The cofactor is Zn(2+).

The protein resides in the cytoplasm. It carries out the reaction tRNA(Ala) + L-alanine + ATP = L-alanyl-tRNA(Ala) + AMP + diphosphate. In terms of biological role, catalyzes the attachment of alanine to tRNA(Ala) in a two-step reaction: alanine is first activated by ATP to form Ala-AMP and then transferred to the acceptor end of tRNA(Ala). Also edits incorrectly charged Ser-tRNA(Ala) and Gly-tRNA(Ala) via its editing domain. The sequence is that of Alanine--tRNA ligase from Staphylococcus saprophyticus subsp. saprophyticus (strain ATCC 15305 / DSM 20229 / NCIMB 8711 / NCTC 7292 / S-41).